Here is a 308-residue protein sequence, read N- to C-terminus: Bifunctional protein FolD (308 aa).

NADP(+) is bound at residue 170 to 172 (GKG).

This sequence belongs to the tetrahydrofolate dehydrogenase/cyclohydrolase family. In terms of assembly, homodimer.

The enzyme catalyses (6R)-5,10-methylene-5,6,7,8-tetrahydrofolate + NADP(+) = (6R)-5,10-methenyltetrahydrofolate + NADPH. It carries out the reaction (6R)-5,10-methenyltetrahydrofolate + H2O = (6R)-10-formyltetrahydrofolate + H(+). It functions in the pathway one-carbon metabolism; tetrahydrofolate interconversion. Catalyzes the oxidation of 5,10-methylenetetrahydrofolate to 5,10-methenyltetrahydrofolate and then the hydrolysis of 5,10-methenyltetrahydrofolate to 10-formyltetrahydrofolate. This is Bifunctional protein FolD from Pyrobaculum calidifontis (strain DSM 21063 / JCM 11548 / VA1).